The following is a 457-amino-acid chain: Siroheme synthase (457 aa).

The segment at 1–204 (MDHLPIFCQL…QDQQAVEETT (204 aa)) is precorrin-2 dehydrogenase /sirohydrochlorin ferrochelatase. NAD(+) is bound by residues 22 to 23 (DV) and 43 to 44 (LA). Ser-128 carries the post-translational modification Phosphoserine. The segment at 216–457 (GEVVLVGAGP…REKLNWFSNH (242 aa)) is uroporphyrinogen-III C-methyltransferase. Residue Pro-225 participates in S-adenosyl-L-methionine binding. The Proton acceptor role is filled by Asp-248. Lys-270 acts as the Proton donor in catalysis. Residues 301–303 (GGD), Ile-306, 331–332 (TA), Met-382, and Gly-411 each bind S-adenosyl-L-methionine.

The protein in the N-terminal section; belongs to the precorrin-2 dehydrogenase / sirohydrochlorin ferrochelatase family. This sequence in the C-terminal section; belongs to the precorrin methyltransferase family.

The catalysed reaction is uroporphyrinogen III + 2 S-adenosyl-L-methionine = precorrin-2 + 2 S-adenosyl-L-homocysteine + H(+). It catalyses the reaction precorrin-2 + NAD(+) = sirohydrochlorin + NADH + 2 H(+). It carries out the reaction siroheme + 2 H(+) = sirohydrochlorin + Fe(2+). It participates in cofactor biosynthesis; adenosylcobalamin biosynthesis; precorrin-2 from uroporphyrinogen III: step 1/1. The protein operates within cofactor biosynthesis; adenosylcobalamin biosynthesis; sirohydrochlorin from precorrin-2: step 1/1. Its pathway is porphyrin-containing compound metabolism; siroheme biosynthesis; precorrin-2 from uroporphyrinogen III: step 1/1. It functions in the pathway porphyrin-containing compound metabolism; siroheme biosynthesis; siroheme from sirohydrochlorin: step 1/1. It participates in porphyrin-containing compound metabolism; siroheme biosynthesis; sirohydrochlorin from precorrin-2: step 1/1. In terms of biological role, multifunctional enzyme that catalyzes the SAM-dependent methylations of uroporphyrinogen III at position C-2 and C-7 to form precorrin-2 via precorrin-1. Then it catalyzes the NAD-dependent ring dehydrogenation of precorrin-2 to yield sirohydrochlorin. Finally, it catalyzes the ferrochelation of sirohydrochlorin to yield siroheme. This chain is Siroheme synthase, found in Enterobacter sp. (strain 638).